Consider the following 633-residue polypeptide: Peptidoglycan D,D-transpeptidase MrdA (633 aa).

A helical membrane pass occupies residues 22–42 (LVAFLGILLLTGVLIANLYNL). Ser330 acts as the Acyl-ester intermediate in catalysis.

This sequence belongs to the transpeptidase family. MrdA subfamily.

Its subcellular location is the cell inner membrane. It carries out the reaction Preferential cleavage: (Ac)2-L-Lys-D-Ala-|-D-Ala. Also transpeptidation of peptidyl-alanyl moieties that are N-acyl substituents of D-alanine.. It functions in the pathway cell wall biogenesis; peptidoglycan biosynthesis. Functionally, catalyzes cross-linking of the peptidoglycan cell wall. The sequence is that of Peptidoglycan D,D-transpeptidase MrdA from Escherichia coli O157:H7.